Reading from the N-terminus, the 271-residue chain is Low choriolytic enzyme (271 aa).

The signal sequence occupies residues 1 to 20 (MDLLAKASVLLLLLLSLSNA). Positions 21–71 (QTDNMEEAENGSSKEEIDESELEDVSSIIFRMNNNSMEELLEGDLVLPKTR) are cleaved as a propeptide — activation peptide. 2 N-linked (GlcNAc...) asparagine glycosylation sites follow: Asn-30 and Asn-54. One can recognise a Peptidase M12A domain in the interval 72–271 (NAMKCFGAPD…ILRVNKLYKC (200 aa)). 3 cysteine pairs are disulfide-bonded: Cys-76/Cys-83, Cys-123/Cys-271, and Cys-144/Cys-164. His-172 lines the Zn(2+) pocket. The active site involves Glu-173. Residues His-176 and His-182 each coordinate Zn(2+). A glycan (N-linked (GlcNAc...) asparagine) is linked at Asn-211.

Zn(2+) is required as a cofactor.

The protein resides in the zymogen granule. The enzyme catalyses Hydrolysis of the inner layer of fish egg envelope. Also hydrolysis of casein and small molecule substrates such as succinyl-Leu-Leu-Val-Tyr-|-7-(4-methyl)coumarylamide.. Functionally, participates in the breakdown of the egg envelope, which is derived from the egg extracellular matrix, at the time of hatching. Thus allowing the newly hatched fish to swim free. LCE solubilizes the egg envelope only after it has been swollen by the action of HCE. The sequence is that of Low choriolytic enzyme (lce) from Oryzias latipes (Japanese rice fish).